The sequence spans 378 residues: Glutamate 5-kinase (378 aa).

Residue K20 coordinates ATP. Residues S60, D147, and N159 each contribute to the substrate site. Residues 179–180 (TD) and 221–227 (TGGMLTK) each bind ATP. Residues 286–364 (RGRVVLDDGA…SQIARILGSM (79 aa)) form the PUA domain.

The protein belongs to the glutamate 5-kinase family.

The protein localises to the cytoplasm. It catalyses the reaction L-glutamate + ATP = L-glutamyl 5-phosphate + ADP. The protein operates within amino-acid biosynthesis; L-proline biosynthesis; L-glutamate 5-semialdehyde from L-glutamate: step 1/2. Its function is as follows. Catalyzes the transfer of a phosphate group to glutamate to form L-glutamate 5-phosphate. This chain is Glutamate 5-kinase, found in Bordetella pertussis (strain Tohama I / ATCC BAA-589 / NCTC 13251).